A 126-amino-acid chain; its full sequence is Large ribosomal subunit protein bL20 (126 aa).

Basic residues predominate over residues 1–15; it reads MARVKRAVNAQKKRR. The tract at residues 1–20 is disordered; sequence MARVKRAVNAQKKRRTTLER.

This sequence belongs to the bacterial ribosomal protein bL20 family.

In terms of biological role, binds directly to 23S ribosomal RNA and is necessary for the in vitro assembly process of the 50S ribosomal subunit. It is not involved in the protein synthesizing functions of that subunit. This chain is Large ribosomal subunit protein bL20, found in Beutenbergia cavernae (strain ATCC BAA-8 / DSM 12333 / CCUG 43141 / JCM 11478 / NBRC 16432 / NCIMB 13614 / HKI 0122).